The following is a 252-amino-acid chain: tRNA1(Val) (adenine(37)-N6)-methyltransferase (252 aa).

It belongs to the methyltransferase superfamily. tRNA (adenine-N(6)-)-methyltransferase family.

Its subcellular location is the cytoplasm. The catalysed reaction is adenosine(37) in tRNA1(Val) + S-adenosyl-L-methionine = N(6)-methyladenosine(37) in tRNA1(Val) + S-adenosyl-L-homocysteine + H(+). In terms of biological role, specifically methylates the adenine in position 37 of tRNA(1)(Val) (anticodon cmo5UAC). This Yersinia pseudotuberculosis serotype O:3 (strain YPIII) protein is tRNA1(Val) (adenine(37)-N6)-methyltransferase.